A 376-amino-acid polypeptide reads, in one-letter code: Polar flagellin A (376 aa).

Coiled coils occupy residues 103–128 and 310–338; these read SNSK…RIAE and FQNR…IKDT.

The protein belongs to the bacterial flagellin family. Heteromer of multiple flagellin subunits including FlaA, FlaB/D, FlaC, FlaE and FlaF.

The protein localises to the secreted. Its subcellular location is the bacterial flagellum. Flagellin is the subunit protein which polymerizes to form the filaments of bacterial flagella. FlaA is not essential for polar flagellar synthesis and swimming motility. Homomer of FlaA is able to form a functional filament. In Vibrio parahaemolyticus serotype O3:K6 (strain RIMD 2210633), this protein is Polar flagellin A (flaA).